The sequence spans 89 residues: Large ribosomal subunit protein bL28 (89 aa).

The protein belongs to the bacterial ribosomal protein bL28 family.

In Chlamydia abortus (strain DSM 27085 / S26/3) (Chlamydophila abortus), this protein is Large ribosomal subunit protein bL28.